The primary structure comprises 314 residues: Vacuolar membrane protein FOSTERSO_4058 (314 aa).

The interval Lys-32–Gly-59 is disordered. Residues Val-93–Leu-113 form a helical membrane-spanning segment. A phosphoserine mark is found at Ser-148, Ser-254, and Ser-274. The segment at Glu-240–Asn-309 is disordered. Basic and acidic residues predominate over residues Ser-254–His-269.

This sequence belongs to the PRM5 family.

Its subcellular location is the vacuole membrane. The protein is Vacuolar membrane protein FOSTERSO_4058 of Saccharomyces cerevisiae (strain FostersO) (Baker's yeast).